The sequence spans 206 residues: Small ribosomal subunit protein uS4 (206 aa).

The region spanning 96-156 is the S4 RNA-binding domain; that stretch reads RRLDNVVYRM…DKSKNQSRIK (61 aa).

This sequence belongs to the universal ribosomal protein uS4 family. Part of the 30S ribosomal subunit. Contacts protein S5. The interaction surface between S4 and S5 is involved in control of translational fidelity.

Functionally, one of the primary rRNA binding proteins, it binds directly to 16S rRNA where it nucleates assembly of the body of the 30S subunit. Its function is as follows. With S5 and S12 plays an important role in translational accuracy. This chain is Small ribosomal subunit protein uS4, found in Buchnera aphidicola subsp. Schizaphis graminum (strain Sg).